Reading from the N-terminus, the 1203-residue chain is Potassium/sodium hyperpolarization-activated cyclic nucleotide-gated channel 4 (1203 aa).

The segment at 1–182 (MDKLPPSMRK…QPASASCEQP (182 aa)) is disordered. The Cytoplasmic portion of the chain corresponds to 1-263 (MDKLPPSMRK…IIHPYSDFRF (263 aa)). Residues 26 to 36 (MDEEEDAEEEG) show a composition bias toward acidic residues. Gly residues predominate over residues 105-117 (SRGGGSGGTGSGS). Positions 121-133 (HLHDSAEERRLIA) are enriched in basic and acidic residues. The residue at position 138 (serine 138) is a Phosphoserine. A compositionally biased stretch (pro residues) spans 163–174 (ASPPPPQQPPQP). The segment at 209-260 (GQAGFMQRQFGAMLQPGVNKFSLRMFGSQKAVEREQERVKSAGFWIIHPYSD) is involved in subunit assembly. A helical membrane pass occupies residues 264–286 (YWDLTMLLLMVGNLIIIPVGITF). Topologically, residues 287 to 293 (FKDENTT) are extracellular. Residues 294–314 (PWIVFNVVSDTFFLIDLVLNF) form a helical membrane-spanning segment. The Cytoplasmic portion of the chain corresponds to 315-336 (RTGIVVEDNTEIILDPQRIKMK). The helical transmembrane segment at 337–359 (YLKSWFMVDFISSIPVDYIFLIV) threads the bilayer. The Extracellular portion of the chain corresponds to 360–378 (ETRIDSEVYKTARALRIVR). The chain crosses the membrane as a helical; Voltage-sensor span at residues 379 to 399 (FTKILSLLRLLRLSRLIRYIH). The Cytoplasmic portion of the chain corresponds to 400–413 (QWEEIFHMTYDLAS). The chain crosses the membrane as a helical span at residues 414-436 (AVVRIVNLIGMMLLLCHWDGCLQ). Over 437-464 (FLVPMLQDFPDDCWVSINNMVNNSWGKQ) the chain is Extracellular. The N-linked (GlcNAc...) asparagine glycan is linked to asparagine 458. An intramembrane region (pore-forming) is located at residues 465–486 (YSYALFKAMSHMLCIGYGRQAP). Over 487–491 (VGMSD) the chain is Extracellular. Residues 492–517 (VWLTMLSMIVGATCYAMFIGHATALI) traverse the membrane as a helical segment. Over 518 to 1203 (QSLDSSRRQY…PVRSKLPSNL (686 aa)) the chain is Cytoplasmic. Positions 559, 562, 564, and 566 each coordinate 3',5'-cyclic GMP. 3',5'-cyclic AMP is bound by residues glycine 659, glutamate 660, cysteine 662, arginine 669, threonine 670, valine 673, and arginine 710. Disordered stretches follow at residues 836–856 (ALGS…SSSS), 870–897 (GLSP…TPSA), and 918–1203 (LSSS…PSNL). 2 stretches are compositionally biased toward low complexity: residues 918-941 (LSSS…AAQP) and 966-986 (RSPS…SLGL). The span at 995–1004 (ETPPRQPEPP) shows a compositional bias: pro residues. The span at 1005 to 1028 (SLVAGASGGASPVGFTPRGGLSPP) shows a compositional bias: low complexity. Over residues 1029–1042 (GHSPGPPRTFPSAP) the composition is skewed to pro residues. Residues 1045-1056 (ASGSHGSLLLPP) are compositionally biased toward low complexity. 2 positions are modified to phosphoserine: serine 1105 and serine 1108. Residues 1122 to 1137 (AGGGSGGSGSSGGLGP) show a composition bias toward gly residues.

Belongs to the potassium channel HCN family. Homotetramer. The channel assemble into homotetramers or heteromeric complexes that contains of four pore-forming subunits. Interacts with PEX5L with a 4:4 HCN4:PEX5L stoichiometry; reduces the effects of cAMP on the voltage-dependence and rate of activation. Interacts with IRAG1; regulates HCN4 channel activity. Interacts with IRAG2; regulates HCN4 channel activity. S-palmitoylated. As to expression, highly expressed in thalamus, testis and in heart, both in ventricle and atrium. Detected at much lower levels in amygdala, substantia nigra, cerebellum and hippocampus.

It is found in the cell membrane. The catalysed reaction is K(+)(in) = K(+)(out). The enzyme catalyses Na(+)(in) = Na(+)(out). With respect to regulation, activated by cAMP and to a lesser extent by cGMP and cCMP. cAMP binding causes a conformation change that leads to the assembly of an active tetramer and channel opening. Binding of cAMP removes a tonic inhibition conferred by cyclic nucleotide-binding domain (CNBD) on channel opening. Cyclic dinucleotides can modulate HCN4 channel; cyclic dinucleotides acting as potent antagonists of cAMP. Inhibited by extracellular Cs(+) ions. Auxiliary subunits can also regulate HCN4 channel. IRAG1 causes a gain-of-function by shifting HCN4 activation to more depolarized membrane potentials in the absence of cAMP. In contrast, IRAG2 causes a loss-of-function by inhibiting cAMP-dependent potentiation of HCN4 activation. Functionally, hyperpolarization-activated ion channel that are permeable to Na(+) and K(+) ions with very slow activation and inactivation. Exhibits higher selectivity for K(+) over Na(+) ions. Contributes to the native pacemaker currents in heart (If) that regulate the rhythm of heart beat. Contributes to the native pacemaker currents in neurons (Ih). May mediate responses to sour stimuli. In Homo sapiens (Human), this protein is Potassium/sodium hyperpolarization-activated cyclic nucleotide-gated channel 4.